The sequence spans 369 residues: Guanine nucleotide-binding protein subunit beta-2 (369 aa).

Positions 1 to 24 (MSTIAGESSSSSKMPENSQPTTTE) are enriched in polar residues. Residues 1-28 (MSTIAGESSSSSKMPENSQPTTTEKGSE) form a disordered region. WD repeat units follow at residues 79–109 (GHVG…IVWD), 121–151 (MPTT…SVVP), 167–197 (THTS…AIWD), 209–241 (GHTG…LVWD), 253–283 (GHEA…RLFD), 297–327 (SILF…GVWD), and 339–369 (GHEN…RIWA).

Belongs to the WD repeat G protein beta family. G proteins are composed of 3 units, alpha, beta and gamma. Interacts with G protein gamma subunits gpc-1 and gpc-2 and with egl-10 and eat-16.

Guanine nucleotide-binding proteins (G proteins) are involved as a modulator or transducer in various transmembrane signaling systems. The beta and gamma chains are required for the GTPase activity, for replacement of GDP by GTP, and for G protein-effector interaction. Plays a role in regulating dopamine-mediated locomotion behavior. The sequence is that of Guanine nucleotide-binding protein subunit beta-2 from Caenorhabditis elegans.